The chain runs to 265 residues: Arcelin-1 (265 aa).

A signal peptide spans 1-21; sequence MASSNLLTLALFLVLLTHANS. Asn-33, Asn-89, and Asn-128 each carry an N-linked (GlcNAc...) asparagine glycan. Cys-165 and Cys-201 are oxidised to a cystine.

This sequence belongs to the leguminous lectin family. As to quaternary structure, homodimer.

Its function is as follows. Seed storage. This carbohydrate-binding lectin has toxic effects on an important bean bruchid pest, Z.subfasciatus. Antibiosis properties of legume lectins are proposed to be due to the lysis of epithelial cells of the intestine by binding to the carbohydrate moieties of these proteins. This Phaseolus vulgaris (Kidney bean) protein is Arcelin-1 (ARC1).